The primary structure comprises 59 residues: U-myrmeciitoxin(01)-Mg5a (59 aa).

Positions 1–21 (MRLSYLSLALAIIFVLTIMHA) are cleaved as a signal peptide. Residues 22–38 (SNVEAKASADPEPDAVG) constitute a propeptide that is removed on maturation.

As to expression, expressed by the venom gland.

The protein localises to the secreted. In terms of biological role, may have antimicrobial properties, like most ant linear peptides. The polypeptide is U-myrmeciitoxin(01)-Mg5a (Myrmecia gulosa (Red bulldog ant)).